A 314-amino-acid chain; its full sequence is Ribosomal RNA small subunit methyltransferase H (314 aa).

S-adenosyl-L-methionine is bound by residues Gly-36 to His-38, Asp-56, Phe-80, Asp-102, and Gln-109.

The protein belongs to the methyltransferase superfamily. RsmH family.

The protein localises to the cytoplasm. It carries out the reaction cytidine(1402) in 16S rRNA + S-adenosyl-L-methionine = N(4)-methylcytidine(1402) in 16S rRNA + S-adenosyl-L-homocysteine + H(+). Its function is as follows. Specifically methylates the N4 position of cytidine in position 1402 (C1402) of 16S rRNA. The protein is Ribosomal RNA small subunit methyltransferase H of Citrobacter koseri (strain ATCC BAA-895 / CDC 4225-83 / SGSC4696).